The following is a 1320-amino-acid chain: Protein brunelleschi (1320 aa).

The interval 313–411 (HRNSSLQEAG…IPGHQRNGDL (99 aa)) is disordered. Positions 314-327 (RNSSLQEAGTSPLK) are enriched in polar residues. A Phosphoserine modification is found at S317. T329 is modified (phosphothreonine). Residues 329-340 (TPEKWRASDATK) are compositionally biased toward basic and acidic residues. The span at 345–361 (SDATANNVDSNQPQQRV) shows a compositional bias: polar residues. Over residues 362-400 (TSNSSSCSSVSSLVTTATNSSASDTPTTSSSSTSTISAA) the composition is skewed to low complexity. S672 is modified (phosphoserine). The disordered stretch occupies residues 923-954 (VSTSGHASLPSRVGSPHHRRNEPQNSSFRSTI). Polar residues predominate over residues 945–954 (PQNSSFRSTI).

This sequence belongs to the NIBP family. In terms of assembly, may be part of the multisubunit TRAPP (transport protein particle) complex.

It is found in the cytoplasm. The protein localises to the golgi apparatus. Its function is as follows. Cooperates with Rab11 and fwd/PI4K to mediate the flow of membrane through the Golgi, which is required to support cleavage furrow ingression, therefore promoting cytokinesis in male meiotic cells. In Drosophila melanogaster (Fruit fly), this protein is Protein brunelleschi.